The sequence spans 242 residues: Large ribosomal subunit protein uL1 (242 aa).

It belongs to the universal ribosomal protein uL1 family. As to quaternary structure, part of the 50S ribosomal subunit.

In terms of biological role, binds directly to 23S rRNA. The L1 stalk is quite mobile in the ribosome, and is involved in E site tRNA release. Functionally, protein L1 is also a translational repressor protein, it controls the translation of the L11 operon by binding to its mRNA. The polypeptide is Large ribosomal subunit protein uL1 (Sulfurihydrogenibium sp. (strain YO3AOP1)).